The chain runs to 307 residues: Putative serpin A13 (307 aa).

Residues 1–21 form the signal peptide; that stretch reads MEASRWWLLVTVLMAGAHCVA. N-linked (GlcNAc...) asparagine glycosylation is found at N150 and N250.

This sequence belongs to the serpin family.

It localises to the secreted. This Homo sapiens (Human) protein is Putative serpin A13 (SERPINA13P).